Consider the following 133-residue polypeptide: Aspartate 1-decarboxylase (133 aa).

Ser-26 functions as the Schiff-base intermediate with substrate; via pyruvic acid in the catalytic mechanism. Ser-26 is subject to Pyruvic acid (Ser). Residue Thr-58 participates in substrate binding. Tyr-59 (proton donor) is an active-site residue. 74-76 (GAA) provides a ligand contact to substrate.

Belongs to the PanD family. In terms of assembly, heterooctamer of four alpha and four beta subunits. Pyruvate serves as cofactor. In terms of processing, is synthesized initially as an inactive proenzyme, which is activated by self-cleavage at a specific serine bond to produce a beta-subunit with a hydroxyl group at its C-terminus and an alpha-subunit with a pyruvoyl group at its N-terminus.

The protein resides in the cytoplasm. The enzyme catalyses L-aspartate + H(+) = beta-alanine + CO2. The protein operates within cofactor biosynthesis; (R)-pantothenate biosynthesis; beta-alanine from L-aspartate: step 1/1. In terms of biological role, catalyzes the pyruvoyl-dependent decarboxylation of aspartate to produce beta-alanine. The sequence is that of Aspartate 1-decarboxylase from Legionella pneumophila (strain Lens).